We begin with the raw amino-acid sequence, 346 residues long: MAQAPDREKALELAMAQIEKSYGKGSVMRLGDEVRQPISIIPTGSIALDVALGIGGLPRGRVIEIYGPESSGKTTVALHAVANAQAAGGVAAFIDAEHALDPEYAKKLGVDTDSLLVSQPDTGEQALEIADMLIRSGALDIVVIDSVAALVPRAELEGEMGDSHVGLQARLMSQALRKMTGALNNSGTTAIFINQLRDKIGVMFGSPETTTGGKALKFYASVRMDVRRIETLKDGTNAVGNRTRVKIVKNKVSPPFKQAEFDILYGRGISREGSLIDMGVDQGFIRKSGAWFTYEGEQLGQGKENARNFLLENGEVANEIEKKIKEKLGIGAVVTDDGVLPAPVDF.

ATP is bound at residue 67 to 74; that stretch reads GPESSGKT.

It belongs to the RecA family.

The protein localises to the cytoplasm. Its function is as follows. Can catalyze the hydrolysis of ATP in the presence of single-stranded DNA, the ATP-dependent uptake of single-stranded DNA by duplex DNA, and the ATP-dependent hybridization of homologous single-stranded DNAs. It interacts with LexA causing its activation and leading to its autocatalytic cleavage. The chain is Protein RecA from Mycobacterium marinum (strain ATCC BAA-535 / M).